Consider the following 241-residue polypeptide: Aspartate/glutamate leucyltransferase (241 aa).

This sequence belongs to the R-transferase family. Bpt subfamily.

The protein resides in the cytoplasm. The catalysed reaction is N-terminal L-glutamyl-[protein] + L-leucyl-tRNA(Leu) = N-terminal L-leucyl-L-glutamyl-[protein] + tRNA(Leu) + H(+). The enzyme catalyses N-terminal L-aspartyl-[protein] + L-leucyl-tRNA(Leu) = N-terminal L-leucyl-L-aspartyl-[protein] + tRNA(Leu) + H(+). In terms of biological role, functions in the N-end rule pathway of protein degradation where it conjugates Leu from its aminoacyl-tRNA to the N-termini of proteins containing an N-terminal aspartate or glutamate. The chain is Aspartate/glutamate leucyltransferase from Parvibaculum lavamentivorans (strain DS-1 / DSM 13023 / NCIMB 13966).